We begin with the raw amino-acid sequence, 338 residues long: Large ribosomal subunit protein uL10 (338 aa).

The segment at Pro-297 to Gly-338 is disordered. Low complexity predominate over residues Ser-298–Thr-308. Residues Ala-309–Ser-325 show a composition bias toward basic and acidic residues.

It belongs to the universal ribosomal protein uL10 family. As to quaternary structure, part of the 50S ribosomal subunit. Forms part of the ribosomal stalk which helps the ribosome interact with GTP-bound translation factors. Forms a heptameric L10(L12)2(L12)2(L12)2 complex, where L10 forms an elongated spine to which the L12 dimers bind in a sequential fashion.

Functionally, forms part of the ribosomal stalk, playing a central role in the interaction of the ribosome with GTP-bound translation factors. This Saccharolobus islandicus (strain M.14.25 / Kamchatka #1) (Sulfolobus islandicus) protein is Large ribosomal subunit protein uL10.